The following is a 631-amino-acid chain: Replication protein E1 (631 aa).

A disordered region spans residues 28–48 (TGDIISEDETEEDEGTASDLD). Acidic residues predominate over residues 32-43 (ISEDETEEDEGT). Positions 86–88 (KRK) match the Nuclear localization signal motif. Phosphoserine; by host is present on S92. Residues 168–334 (IGATPPQQIQ…QTQIQHSFQD (167 aa)) form a DNA-binding region region. One can recognise an SF3 helicase domain in the interval 433 to 583 (VDFISFLSYF…FPIDTNGNPV (151 aa)). An ATP-binding site is contributed by 459–466 (GPPNTGKS). A Glycyl lysine isopeptide (Lys-Gly) (interchain with G-Cter in SUMO) cross-link involves residue K540.

Belongs to the papillomaviridae E1 protein family. In terms of assembly, can form hexamers. Interacts with E2 protein; this interaction increases E1 DNA binding specificity. Interacts with host DNA polymerase subunit POLA2. Interacts with host single stranded DNA-binding protein RPA1. Interacts with host TOP1; this interaction stimulates the enzymatic activity of TOP1. In terms of processing, phosphorylated. Sumoylated.

The protein resides in the host nucleus. It carries out the reaction Couples ATP hydrolysis with the unwinding of duplex DNA by translocating in the 3'-5' direction.. The enzyme catalyses ATP + H2O = ADP + phosphate + H(+). Its function is as follows. ATP-dependent DNA 3'-5' helicase required for initiation of viral DNA replication. It forms a complex with the viral E2 protein. The E1-E2 complex binds to the replication origin which contains binding sites for both proteins. During the initial step, a dimer of E1 interacts with a dimer of protein E2 leading to a complex that binds the viral origin of replication with high specificity. Then, a second dimer of E1 displaces the E2 dimer in an ATP-dependent manner to form the E1 tetramer. Following this, two E1 monomers are added to each half of the site, which results in the formation of two E1 trimers on the viral ori. Subsequently, two hexamers will be created. The double hexamer acts as a bi-directional helicase machinery and unwinds the viral DNA and then recruits the host DNA polymerase to start replication. The sequence is that of Replication protein E1 from Homo sapiens (Human).